The following is a 292-amino-acid chain: Diaminopimelate epimerase (292 aa).

Asparagine 13, glutamine 46, and asparagine 66 together coordinate substrate. Cysteine 75 functions as the Proton donor in the catalytic mechanism. Substrate contacts are provided by residues 76–77, asparagine 166, asparagine 199, and 217–218; these read GN and ER. Cysteine 226 functions as the Proton acceptor in the catalytic mechanism. 227–228 is a binding site for substrate; it reads GT.

Belongs to the diaminopimelate epimerase family. As to quaternary structure, homodimer.

It is found in the cytoplasm. The enzyme catalyses (2S,6S)-2,6-diaminopimelate = meso-2,6-diaminopimelate. It functions in the pathway amino-acid biosynthesis; L-lysine biosynthesis via DAP pathway; DL-2,6-diaminopimelate from LL-2,6-diaminopimelate: step 1/1. Its function is as follows. Catalyzes the stereoinversion of LL-2,6-diaminopimelate (L,L-DAP) to meso-diaminopimelate (meso-DAP), a precursor of L-lysine and an essential component of the bacterial peptidoglycan. This chain is Diaminopimelate epimerase, found in Ralstonia nicotianae (strain ATCC BAA-1114 / GMI1000) (Ralstonia solanacearum).